We begin with the raw amino-acid sequence, 67 residues long: uncharacterized protein (67 aa).

2 consecutive transmembrane segments (helical) span residues 10-30 and 40-60; these read EFFIYIFLFIDKANVESIIMW and LMVGVWVVILFLTWFFLWMVF.

Belongs to the plectrovirus ORF10 family.

It localises to the host membrane. This is an uncharacterized protein from Spiroplasma melliferum (SpV1).